The primary structure comprises 532 residues: 56 kDa type-specific antigen (532 aa).

The N-terminal stretch at 1 to 22 (MKKIMLIASAMSALSLPFSASA) is a signal peptide. The helical transmembrane segment at 67-87 (TNGLPFGGTLAAGMTIAPGFR) threads the bilayer. The tract at residues 401-428 (QEEDAKNQGEGDCKQQQGTSEKSKKGKD) is disordered. Residues 403-413 (EDAKNQGEGDC) are compositionally biased toward basic and acidic residues. A helical transmembrane segment spans residues 480 to 500 (TGMVASGALGVAINAAEGVYV).

Its subcellular location is the cell membrane. Its function is as follows. May be an adherent factor for rickettsial adsorption to the host-cell surface and a determinant of virulence of individual rickettsial strain. It is the major outer membrane protein. The polypeptide is 56 kDa type-specific antigen (Orientia tsutsugamushi (Rickettsia tsutsugamushi)).